The chain runs to 101 residues: NAD(P)H-quinone oxidoreductase subunit 4L, chloroplastic (101 aa).

3 helical membrane-spanning segments follow: residues 2–22 (IFEH…YGLI), 32–52 (MCLE…SDFF), and 61–81 (IFSI…PAIV).

The protein belongs to the complex I subunit 4L family. In terms of assembly, NDH is composed of at least 16 different subunits, 5 of which are encoded in the nucleus.

It localises to the plastid. Its subcellular location is the chloroplast thylakoid membrane. It carries out the reaction a plastoquinone + NADH + (n+1) H(+)(in) = a plastoquinol + NAD(+) + n H(+)(out). The catalysed reaction is a plastoquinone + NADPH + (n+1) H(+)(in) = a plastoquinol + NADP(+) + n H(+)(out). Its function is as follows. NDH shuttles electrons from NAD(P)H:plastoquinone, via FMN and iron-sulfur (Fe-S) centers, to quinones in the photosynthetic chain and possibly in a chloroplast respiratory chain. The immediate electron acceptor for the enzyme in this species is believed to be plastoquinone. Couples the redox reaction to proton translocation, and thus conserves the redox energy in a proton gradient. The sequence is that of NAD(P)H-quinone oxidoreductase subunit 4L, chloroplastic from Phaseolus vulgaris (Kidney bean).